We begin with the raw amino-acid sequence, 289 residues long: F-actin-capping protein subunit beta (289 aa).

Residues 73-110 form a disordered region; the sequence is RSPWSNQFDPPLEGGNQGGSGGDGEGDGGEGGAAGSIM. Residues 87-106 show a composition bias toward gly residues; sequence GNQGGSGGDGEGDGGEGGAA.

Belongs to the F-actin-capping protein beta subunit family. Component of the F-actin capping complex, composed of a heterodimer of an alpha and a beta subunit.

The protein resides in the cytoplasm. Its subcellular location is the cytoskeleton. It localises to the actin patch. F-actin-capping proteins bind in a Ca(2+)-independent manner to the fast growing ends of actin filaments (barbed end) thereby blocking the exchange of subunits at these ends. Unlike other capping proteins (such as gelsolin and severin), these proteins do not sever actin filaments. The polypeptide is F-actin-capping protein subunit beta (fac-2) (Neurospora crassa (strain ATCC 24698 / 74-OR23-1A / CBS 708.71 / DSM 1257 / FGSC 987)).